A 383-amino-acid polypeptide reads, in one-letter code: 6-hydroxynicotinate 3-monooxygenase (383 aa).

Residues 1–26 (MQGKPRIAVIGAGLGGTAGAALMARA) form the signal peptide. Residues glycine 15, 34 to 35 (EQ), histidine 47, arginine 108, and leucine 130 each bind FAD. Histidine 47 functions as the Proton acceptor in the catalytic mechanism. Tyrosine 214 serves as the catalytic Proton acceptor. FAD contacts are provided by residues aspartate 293 and 306 to 307 (AA).

The protein belongs to the 6-hydroxynicotinate 3-monooxygenase family. In terms of assembly, monomer. FAD serves as cofactor.

The enzyme catalyses 6-hydroxynicotinate + NADH + O2 + 2 H(+) = 2,5-dihydroxypyridine + CO2 + NAD(+) + H2O. The protein operates within cofactor degradation; nicotinate degradation. Its activity is regulated as follows. Competitively inhibited by 6-hydroxynicotinaldehyde. Functionally, flavin-dependent monooxygenase (FMO) that catalyzes the decarboxylative hydroxylation of 6-hydroxynicotinic acid (6-HNA) to 2,5-dihydroxypyridine (2,5-DHP) with concomitant oxidation of NADH, a step in the aerobic nicotinate degradation pathway. Is also active on the non-natural substrate 5-chloro-6-hydroxynicotinate, and is much less efficient on the substrate analog 4-hydroxybenzoate. The chain is 6-hydroxynicotinate 3-monooxygenase from Bordetella bronchiseptica (strain ATCC BAA-588 / NCTC 13252 / RB50) (Alcaligenes bronchisepticus).